The sequence spans 3589 residues: D-lysergyl-peptide-synthetase subunit 1 (3589 aa).

The interval 344 to 742 is adenylation (A) domain 1; that stretch reads NCHSRPDSLA…IGRKDLQVKV (399 aa). The Carrier 1 domain maps to 883–952; that stretch reads VERRLQLLFA…KLRDLAAASS (70 aa). An O-(pantetheine 4'-phosphoryl)serine modification is found at serine 915. Positions 995–1380 are condensation (C) domain 1; the sequence is EDIYPCTSLQ…SQFQHILTQI (386 aa). The tract at residues 1424 to 1826 is adenylation (A) domain 2; the sequence is QAKAQMQPEA…RRKDSQVKLR (403 aa). A Carrier 2 domain is found at 1974–2042; sequence LERELQKIWA…TIEKLAAAAV (69 aa). Position 2006 is an O-(pantetheine 4'-phosphoryl)serine (serine 2006). Residues 2087 to 2509 are condensation (C) domain 2; sequence VEDIYPCSPI…IEMLDEEHRS (423 aa). The adenylation (A) domain 3 stretch occupies residues 2534–2929; it reads CLESPESPAI…GRKDDQVKIR (396 aa). Residues 3064-3132 form the Carrier 3 domain; sequence LETRLQELVG…RLSELAVVLN (69 aa). An O-(pantetheine 4'-phosphoryl)serine modification is found at serine 3096. The interval 3187–3585 is cyclization (Cyc) domain; sequence TNFIALHFSQ…TYPESLVSEL (399 aa).

This sequence belongs to the NRP synthetase family.

It functions in the pathway alkaloid biosynthesis; ergot alkaloid biosynthesis. D-lysergyl-peptide-synthetase subunit 1; part of the gene cluster that mediates the biosynthesis of fungal ergot alkaloid ergovaline, the predominant ergopeptine product in E.festucae var. lolii. DmaW catalyzes the first step of ergot alkaloid biosynthesis by condensing dimethylallyl diphosphate (DMAP) and tryptophan to form 4-dimethylallyl-L-tryptophan. The second step is catalyzed by the methyltransferase easF that methylates 4-dimethylallyl-L-tryptophan in the presence of S-adenosyl-L-methionine, resulting in the formation of 4-dimethylallyl-L-abrine. The catalase easC and the FAD-dependent oxidoreductase easE then transform 4-dimethylallyl-L-abrine to chanoclavine-I which is further oxidized by easD in the presence of NAD(+), resulting in the formation of chanoclavine-I aldehyde. Agroclavine dehydrogenase easG then mediates the conversion of chanoclavine-I aldehyde to agroclavine via a non-enzymatic adduct reaction: the substrate is an iminium intermediate that is formed spontaneously from chanoclavine-I aldehyde in the presence of glutathione. The presence of easA is not required to complete this reaction. Further conversion of agroclavine to paspalic acid is a two-step process involving oxidation of agroclavine to elymoclavine and of elymoclavine to paspalic acid, the second step being performed by the elymoclavine oxidase cloA. Paspalic acid is then further converted to D-lysergic acid. Ergovaline is assembled from D-lysergic acid and three different amino acids by the D-lysergyl-peptide-synthetase composed of a monomudular (lpsB) and a trimodular (lpsA) nonribosomal peptide synthetase subunit. This chain is D-lysergyl-peptide-synthetase subunit 1, found in Epichloe festucae var. lolii (Neotyphodium lolii).